A 496-amino-acid polypeptide reads, in one-letter code: Putative ammonium transporter 1 member 5 (496 aa).

Helical transmembrane passes span 50-70, 85-105, 131-151, 156-176, 202-222, 246-266, 284-306, 314-334, 336-356, 369-389, and 422-442; these read LLFS…LCAG, VLDA…FAFG, FFLY…GSIA, FVAY…VVSH, FAGS…GALI, LVVL…PGSF, GIGR…TLFG, WNVT…TAGC, VVDP…LIGC, LEAA…VGLF, and LVQI…LFFI. S485 carries the phosphoserine modification.

This sequence belongs to the ammonia transporter channel (TC 1.A.11.2) family.

It is found in the membrane. In terms of biological role, involved in ammonium transport. This Arabidopsis thaliana (Mouse-ear cress) protein is Putative ammonium transporter 1 member 5 (AMT1-5).